A 116-amino-acid polypeptide reads, in one-letter code: Small ribosomal subunit protein uS8c (116 aa).

It belongs to the universal ribosomal protein uS8 family. In terms of assembly, part of the 30S ribosomal subunit.

It localises to the plastid. The protein localises to the chloroplast. Its function is as follows. One of the primary rRNA binding proteins, it binds directly to 16S rRNA central domain where it helps coordinate assembly of the platform of the 30S subunit. This Musa acuminata (Banana) protein is Small ribosomal subunit protein uS8c (rps8).